The sequence spans 101 residues: MSSSTSCPIPGCRDQLPDGYSTTPGGTLYATTPGGTRIIYDRKFLLECKNSPIARTPPCCLPQIPGVTTLPAVPPSKLELLKEQKQTEVEITDDEQFEMDM.

The tract at residues 1–28 is disordered; sequence MSSSTSCPIPGCRDQLPDGYSTTPGGTL. The short motif at 40–46 is the YXXXXLphi motif element; that stretch reads YDRKFLL. The short motif at 97 to 101 is the TOS motif element; that stretch reads FEMDM.

Belongs to the eIF4E-binding protein family. In terms of assembly, interacts with EIF4E. Interacts with RPA2 (via N-terminus); the interaction enhances EIF4EBP3-mediated inhibition of EIF4E-mediated mRNA nuclear export. In terms of processing, phosphorylated.

Its subcellular location is the cytoplasm. It localises to the nucleus. Functionally, repressor of translation initiation that regulates EIF4E activity by preventing its assembly into the eIF4F complex: the hypophosphorylated form competes with EIF4G1/EIF4G3 and strongly binds to EIF4E, leading to repression of translation. In contrast, the hyperphosphorylated form dissociates from EIF4E, allowing interaction between EIF4G1/EIF4G3 and EIF4E, leading to initiation of translation. Inhibits EIF4E-mediated mRNA nuclear export. This is Eukaryotic translation initiation factor 4E-binding protein 3 (Eif4ebp3) from Mus musculus (Mouse).